Reading from the N-terminus, the 612-residue chain is Membrane protein insertase YidC (612 aa).

The next 7 membrane-spanning stretches (helical) occupy residues 4–24 (NTII…YLNH), 329–349 (LVPL…IPIF), 358–378 (VNLG…LFPL), 434–454 (ILLQ…AIGL), 484–504 (FLGN…ILNT), 524–544 (LTMY…PAGL), and 546–566 (YYYL…RGLV).

It belongs to the OXA1/ALB3/YidC family. Type 1 subfamily. In terms of assembly, interacts with the Sec translocase complex via SecD. Specifically interacts with transmembrane segments of nascent integral membrane proteins during membrane integration.

It is found in the cell inner membrane. Its function is as follows. Required for the insertion and/or proper folding and/or complex formation of integral membrane proteins into the membrane. Involved in integration of membrane proteins that insert both dependently and independently of the Sec translocase complex, as well as at least some lipoproteins. Aids folding of multispanning membrane proteins. This is Membrane protein insertase YidC from Azobacteroides pseudotrichonymphae genomovar. CFP2.